Here is a 207-residue protein sequence, read N- to C-terminus: Large ribosomal subunit protein bL25 (207 aa).

The protein belongs to the bacterial ribosomal protein bL25 family. CTC subfamily. In terms of assembly, part of the 50S ribosomal subunit; part of the 5S rRNA/L5/L18/L25 subcomplex. Contacts the 5S rRNA. Binds to the 5S rRNA independently of L5 and L18.

This is one of the proteins that binds to the 5S RNA in the ribosome where it forms part of the central protuberance. This is Large ribosomal subunit protein bL25 from Rhizorhabdus wittichii (strain DSM 6014 / CCUG 31198 / JCM 15750 / NBRC 105917 / EY 4224 / RW1) (Sphingomonas wittichii).